A 282-amino-acid polypeptide reads, in one-letter code: D-alanine aminotransferase (282 aa).

Position 32 (Tyr32) interacts with substrate. Arg51 contributes to the pyridoxal 5'-phosphate binding site. Positions 99 and 101 each coordinate substrate. Lys146 serves as the catalytic Proton acceptor. N6-(pyridoxal phosphate)lysine is present on Lys146. Glu178 serves as a coordination point for pyridoxal 5'-phosphate.

It belongs to the class-IV pyridoxal-phosphate-dependent aminotransferase family. In terms of assembly, homodimer. Pyridoxal 5'-phosphate serves as cofactor.

It catalyses the reaction D-alanine + 2-oxoglutarate = D-glutamate + pyruvate. Acts on the D-isomers of alanine, leucine, aspartate, glutamate, aminobutyrate, norvaline and asparagine. The enzyme transfers an amino group from a substrate D-amino acid to the pyridoxal phosphate cofactor to form pyridoxamine and an alpha-keto acid in the first half-reaction. The second half-reaction is the reverse of the first, transferring the amino group from the pyridoxamine to a second alpha-keto acid to form the product D-amino acid via a ping-pong mechanism. This is an important process in the formation of D-alanine and D-glutamate, which are essential bacterial cell wall components. The polypeptide is D-alanine aminotransferase (dat) (Staphylococcus aureus (strain N315)).